Reading from the N-terminus, the 461-residue chain is Cysteine--tRNA ligase (461 aa).

Cysteine 28 provides a ligand contact to Zn(2+). The 'HIGH' region signature appears at 30–40 (VTIYDLCHIGH). Zn(2+)-binding residues include cysteine 209, histidine 234, and glutamate 238. Positions 266-270 (KMSKS) match the 'KMSKS' region motif. Position 269 (lysine 269) interacts with ATP.

This sequence belongs to the class-I aminoacyl-tRNA synthetase family. Monomer. Zn(2+) serves as cofactor.

The protein localises to the cytoplasm. The enzyme catalyses tRNA(Cys) + L-cysteine + ATP = L-cysteinyl-tRNA(Cys) + AMP + diphosphate. This is Cysteine--tRNA ligase from Vibrio atlanticus (strain LGP32) (Vibrio splendidus (strain Mel32)).